We begin with the raw amino-acid sequence, 200 residues long: 3-isopropylmalate dehydratase small subunit (200 aa).

This sequence belongs to the LeuD family. LeuD type 1 subfamily. As to quaternary structure, heterodimer of LeuC and LeuD.

The enzyme catalyses (2R,3S)-3-isopropylmalate = (2S)-2-isopropylmalate. It functions in the pathway amino-acid biosynthesis; L-leucine biosynthesis; L-leucine from 3-methyl-2-oxobutanoate: step 2/4. In terms of biological role, catalyzes the isomerization between 2-isopropylmalate and 3-isopropylmalate, via the formation of 2-isopropylmaleate. The sequence is that of 3-isopropylmalate dehydratase small subunit from Yersinia pestis bv. Antiqua (strain Antiqua).